Reading from the N-terminus, the 399-residue chain is Leu/Ile/Val-binding protein homolog 7 (399 aa).

An N-terminal signal peptide occupies residues 1–22; it reads MEKHLIALSVAALLAGAAPASA.

The protein belongs to the leucine-binding protein family.

Its function is as follows. Component of an amino-acid transport system. The protein is Leu/Ile/Val-binding protein homolog 7 of Brucella suis biovar 1 (strain 1330).